A 75-amino-acid chain; its full sequence is Small ribosomal subunit protein bS18 (75 aa).

This sequence belongs to the bacterial ribosomal protein bS18 family. As to quaternary structure, part of the 30S ribosomal subunit. Forms a tight heterodimer with protein bS6.

Binds as a heterodimer with protein bS6 to the central domain of the 16S rRNA, where it helps stabilize the platform of the 30S subunit. In Sodalis glossinidius (strain morsitans), this protein is Small ribosomal subunit protein bS18.